A 178-amino-acid chain; its full sequence is Large ribosomal subunit protein bL25 (178 aa).

The protein belongs to the bacterial ribosomal protein bL25 family. CTC subfamily. Part of the 50S ribosomal subunit; part of the 5S rRNA/L5/L18/L25 subcomplex. Contacts the 5S rRNA. Binds to the 5S rRNA independently of L5 and L18.

In terms of biological role, this is one of the proteins that binds to the 5S RNA in the ribosome where it forms part of the central protuberance. This chain is Large ribosomal subunit protein bL25, found in Helicobacter pylori (strain Shi470).